We begin with the raw amino-acid sequence, 316 residues long: 4-hydroxy-3-methylbut-2-enyl diphosphate reductase (316 aa).

C12 lines the [4Fe-4S] cluster pocket. The (2E)-4-hydroxy-3-methylbut-2-enyl diphosphate site is built by H41 and H74. H41 and H74 together coordinate dimethylallyl diphosphate. H41 and H74 together coordinate isopentenyl diphosphate. [4Fe-4S] cluster is bound at residue C96. H124 contributes to the (2E)-4-hydroxy-3-methylbut-2-enyl diphosphate binding site. H124 is a dimethylallyl diphosphate binding site. H124 serves as a coordination point for isopentenyl diphosphate. E126 serves as the catalytic Proton donor. T169 contributes to the (2E)-4-hydroxy-3-methylbut-2-enyl diphosphate binding site. Position 199 (C199) interacts with [4Fe-4S] cluster. Residues S227, S228, N229, and S271 each contribute to the (2E)-4-hydroxy-3-methylbut-2-enyl diphosphate site. Dimethylallyl diphosphate contacts are provided by S227, S228, N229, and S271. S227, S228, N229, and S271 together coordinate isopentenyl diphosphate.

Belongs to the IspH family. [4Fe-4S] cluster is required as a cofactor.

It catalyses the reaction isopentenyl diphosphate + 2 oxidized [2Fe-2S]-[ferredoxin] + H2O = (2E)-4-hydroxy-3-methylbut-2-enyl diphosphate + 2 reduced [2Fe-2S]-[ferredoxin] + 2 H(+). It carries out the reaction dimethylallyl diphosphate + 2 oxidized [2Fe-2S]-[ferredoxin] + H2O = (2E)-4-hydroxy-3-methylbut-2-enyl diphosphate + 2 reduced [2Fe-2S]-[ferredoxin] + 2 H(+). It functions in the pathway isoprenoid biosynthesis; dimethylallyl diphosphate biosynthesis; dimethylallyl diphosphate from (2E)-4-hydroxy-3-methylbutenyl diphosphate: step 1/1. The protein operates within isoprenoid biosynthesis; isopentenyl diphosphate biosynthesis via DXP pathway; isopentenyl diphosphate from 1-deoxy-D-xylulose 5-phosphate: step 6/6. Functionally, catalyzes the conversion of 1-hydroxy-2-methyl-2-(E)-butenyl 4-diphosphate (HMBPP) into a mixture of isopentenyl diphosphate (IPP) and dimethylallyl diphosphate (DMAPP). Acts in the terminal step of the DOXP/MEP pathway for isoprenoid precursor biosynthesis. In Xanthomonas oryzae pv. oryzae (strain MAFF 311018), this protein is 4-hydroxy-3-methylbut-2-enyl diphosphate reductase.